The primary structure comprises 598 residues: Arginine--tRNA ligase (598 aa).

Residues 140–150 (ANPTGPLHVGH) carry the 'HIGH' region motif.

The protein belongs to the class-I aminoacyl-tRNA synthetase family. Monomer.

The protein resides in the cytoplasm. It catalyses the reaction tRNA(Arg) + L-arginine + ATP = L-arginyl-tRNA(Arg) + AMP + diphosphate. The sequence is that of Arginine--tRNA ligase from Synechococcus sp. (strain JA-3-3Ab) (Cyanobacteria bacterium Yellowstone A-Prime).